A 216-amino-acid chain; its full sequence is Phosphatidylserine decarboxylase proenzyme (216 aa).

S185 functions as the Schiff-base intermediate with substrate; via pyruvic acid in the catalytic mechanism. S185 carries the post-translational modification Pyruvic acid (Ser); by autocatalysis.

Belongs to the phosphatidylserine decarboxylase family. PSD-A subfamily. In terms of assembly, heterodimer of a large membrane-associated beta subunit and a small pyruvoyl-containing alpha subunit. The cofactor is pyruvate. Is synthesized initially as an inactive proenzyme. Formation of the active enzyme involves a self-maturation process in which the active site pyruvoyl group is generated from an internal serine residue via an autocatalytic post-translational modification. Two non-identical subunits are generated from the proenzyme in this reaction, and the pyruvate is formed at the N-terminus of the alpha chain, which is derived from the carboxyl end of the proenzyme. The post-translation cleavage follows an unusual pathway, termed non-hydrolytic serinolysis, in which the side chain hydroxyl group of the serine supplies its oxygen atom to form the C-terminus of the beta chain, while the remainder of the serine residue undergoes an oxidative deamination to produce ammonia and the pyruvoyl prosthetic group on the alpha chain.

Its subcellular location is the cell membrane. The enzyme catalyses a 1,2-diacyl-sn-glycero-3-phospho-L-serine + H(+) = a 1,2-diacyl-sn-glycero-3-phosphoethanolamine + CO2. Its pathway is phospholipid metabolism; phosphatidylethanolamine biosynthesis; phosphatidylethanolamine from CDP-diacylglycerol: step 2/2. Its function is as follows. Catalyzes the formation of phosphatidylethanolamine (PtdEtn) from phosphatidylserine (PtdSer). This chain is Phosphatidylserine decarboxylase proenzyme, found in Nitrosomonas europaea (strain ATCC 19718 / CIP 103999 / KCTC 2705 / NBRC 14298).